A 34-amino-acid chain; its full sequence is MKVLFVIYVMIQYNYPMFTYNLVNNIINMIQRSM.

This is an uncharacterized protein from Escherichia coli (Bacteriophage T4).